Reading from the N-terminus, the 138-residue chain is Large ribosomal subunit protein bL17 (138 aa).

It belongs to the bacterial ribosomal protein bL17 family. As to quaternary structure, part of the 50S ribosomal subunit. Contacts protein L32.

The chain is Large ribosomal subunit protein bL17 from Granulibacter bethesdensis (strain ATCC BAA-1260 / CGDNIH1).